Reading from the N-terminus, the 1121-residue chain is Ataxin-2 homolog (1121 aa).

Over residues 1 to 10 (MNNNSKRKTR) the composition is skewed to basic residues. The segment at 1-53 (MNNNSKRKTRPSGGGGGGGASGGISRYNANDNSLRPANNKSGAAGNSAGAGAG) is disordered. Residues 12-22 (SGGGGGGGASG) show a composition bias toward gly residues. Residues 27-36 (YNANDNSLRP) are compositionally biased toward polar residues. Over residues 37–47 (ANNKSGAAGNS) the composition is skewed to low complexity. The Sm domain occupies 71-146 (FFMHSATALV…VVKIVAKDFD (76 aa)). Phosphoserine occurs at positions 219 and 232. Disordered stretches follow at residues 270–376 (FAAV…GQGG), 422–458 (GKVM…GGYQ), 476–935 (MHGS…TTGT), and 1039–1076 (QTPQ…TPPT). Residues 274-310 (ERPEQDHRRDGDRERERNDRDREREERDRDRDRDRGN) show a composition bias toward basic and acidic residues. Over residues 323–347 (ETMSSDRYITKQTRGPQMSHVSMSS) the composition is skewed to polar residues. Gly residues-rich tracts occupy residues 367–376 (ISGGGAGQGG) and 434–448 (SGGG…GNGN). Polar residues-rich tracts occupy residues 476 to 487 (MHGSSQYRNPSH) and 499 to 524 (ANAN…NSLN). Low complexity-rich tracts occupy residues 552–596 (PPLQ…PQRQ), 623–684 (PPQQ…MQHQ), 697–711 (QPHY…QPQP), and 720–773 (QQQQ…APEP). Residues 774 to 789 (SQQPLPLYHPMPPPQT) show a composition bias toward pro residues. Low complexity-rich tracts occupy residues 807-825 (ILTA…TPKP) and 835-890 (TTTP…STPV). Composition is skewed to pro residues over residues 914–926 (PSRP…PVPM) and 1048–1062 (PGQP…PQPS).

It belongs to the ataxin-2 family.

The protein resides in the cytoplasm. Functionally, regulator of actin filament formation, though it does not directly assemble with actin filaments. Required for oocyte specification and oocyte positioning in the female germline. Also required for normal eye development and bristle morphology. The polypeptide is Ataxin-2 homolog (Drosophila pseudoobscura pseudoobscura (Fruit fly)).